Here is a 317-residue protein sequence, read N- to C-terminus: 2,3-dihydroxyphenylpropionate/2,3-dihydroxicinnamic acid 1,2-dioxygenase (317 aa).

The active-site Proton donor is histidine 115. The active-site Proton acceptor is the histidine 179.

This sequence belongs to the LigB/MhpB extradiol dioxygenase family. As to quaternary structure, homotetramer. Fe(2+) is required as a cofactor.

The enzyme catalyses 3-(2,3-dihydroxyphenyl)propanoate + O2 = (2Z,4E)-2-hydroxy-6-oxonona-2,4-dienedioate + H(+). It catalyses the reaction (2E)-3-(2,3-dihydroxyphenyl)prop-2-enoate + O2 = (2Z,4E,7E)-2-hydroxy-6-oxonona-2,4,7-trienedioate + H(+). It functions in the pathway aromatic compound metabolism; 3-phenylpropanoate degradation. In terms of biological role, catalyzes the non-heme iron(II)-dependent oxidative cleavage of 2,3-dihydroxyphenylpropionic acid and 2,3-dihydroxicinnamic acid into 2-hydroxy-6-ketononadienedioate and 2-hydroxy-6-ketononatrienedioate, respectively. The polypeptide is 2,3-dihydroxyphenylpropionate/2,3-dihydroxicinnamic acid 1,2-dioxygenase (Paraburkholderia phymatum (strain DSM 17167 / CIP 108236 / LMG 21445 / STM815) (Burkholderia phymatum)).